The chain runs to 337 residues: Inositol 2-dehydrogenase (337 aa).

Belongs to the Gfo/Idh/MocA family. Homotetramer.

The catalysed reaction is myo-inositol + NAD(+) = scyllo-inosose + NADH + H(+). In terms of biological role, involved in the oxidation of myo-inositol (MI) to 2-keto-myo-inositol (2KMI or 2-inosose). The sequence is that of Inositol 2-dehydrogenase from Pseudarthrobacter chlorophenolicus (strain ATCC 700700 / DSM 12829 / CIP 107037 / JCM 12360 / KCTC 9906 / NCIMB 13794 / A6) (Arthrobacter chlorophenolicus).